A 133-amino-acid chain; its full sequence is Small ribosomal subunit protein uS8c (133 aa).

It belongs to the universal ribosomal protein uS8 family. As to quaternary structure, part of the 30S ribosomal subunit.

It is found in the plastid. The protein localises to the chloroplast. One of the primary rRNA binding proteins, it binds directly to 16S rRNA central domain where it helps coordinate assembly of the platform of the 30S subunit. The chain is Small ribosomal subunit protein uS8c (rps8) from Chlorokybus atmophyticus (Soil alga).